We begin with the raw amino-acid sequence, 56 residues long: Bacteriocin sublancin-168 (56 aa).

The propeptide occupies 1–19; sequence MEKLFKEVKLEELENQKGS. 2 disulfides stabilise this stretch: Cys-26/Cys-55 and Cys-33/Cys-48. Cys-41 carries an S-linked (Glc) cysteine; by host glycan.

As to quaternary structure, monomer. Post-translationally, production of active sublancin-168 requires at least one thiol-disulfide oxidoreductase (BdbB or, in its absence, BdbC). Membrane translocation and cleavage of the precursor are probably performed by SunT.

It localises to the secreted. Functionally, bacteriocin active against Gram-positive bacteria. Inhibits B.cereus spore outgrowth, after the germination stage, approximately 1000-fold better than it inhibits exponential growth of the same cells. Inhibits B.subtilis strain ATCC 6633. The sequence is that of Bacteriocin sublancin-168 (sunA) from Bacillus pumilus (Bacillus mesentericus).